The sequence spans 165 residues: Nucleoside-triphosphatase THEP1 (165 aa).

ATP-binding positions include 7-14 (GRPGVGKT) and 93-100 (LVIIDEVG).

It belongs to the THEP1 NTPase family.

It carries out the reaction a ribonucleoside 5'-triphosphate + H2O = a ribonucleoside 5'-diphosphate + phosphate + H(+). In terms of biological role, has nucleotide phosphatase activity towards ATP, GTP, CTP, TTP and UTP. May hydrolyze nucleoside diphosphates with lower efficiency. The protein is Nucleoside-triphosphatase THEP1 of Archaeoglobus fulgidus (strain ATCC 49558 / DSM 4304 / JCM 9628 / NBRC 100126 / VC-16).